Consider the following 603-residue polypeptide: UvrABC system protein C (603 aa).

In terms of domain architecture, GIY-YIG spans 14 to 92 (ELPGVYRMLD…IKSLAPRYNI (79 aa)). Residues 201–236 (QEVTRRLTKSMEEASAKLAFEQAAVFRDQIQSLHQV) enclose the UVR domain.

It belongs to the UvrC family. In terms of assembly, interacts with UvrB in an incision complex.

It localises to the cytoplasm. Its function is as follows. The UvrABC repair system catalyzes the recognition and processing of DNA lesions. UvrC both incises the 5' and 3' sides of the lesion. The N-terminal half is responsible for the 3' incision and the C-terminal half is responsible for the 5' incision. In Dechloromonas aromatica (strain RCB), this protein is UvrABC system protein C.